A 290-amino-acid polypeptide reads, in one-letter code: METDLAEMPEKGVLSSQDSPHFQEKSTEEGEVAALRLTARSQAAAAAAAPGSRSLRGVHVPPPLHPAPAREESARTPAAAGRAAKMAEAPASPAPLSPLEVELDPEFEPQSRPRSCTWPLQRPELQASPAKPSGETAADSMIPEEEDDEDDEDGGGRAGSAMAIGGGGGSRTLVSGLLLEDSVRVLAPGGQDPGSGPATAAGGLSGGTQALLQPQQPLPPPQPGAAGGSGQPRKCSSRRNAWGNLSYADLITRAIESSPDRRLTLSQIYEWMVSCVPYFKDKGNSNSSAG.

Disordered stretches follow at residues methionine 1–glycine 30 and alanine 44–arginine 239. Composition is skewed to low complexity over residues alanine 44 to histidine 59 and arginine 75 to alanine 91. Position 117 is a phosphothreonine; by PKB/AKT1 (threonine 117). Over residues isoleucine 142 to aspartate 153 the composition is skewed to acidic residues. Positions tryptophan 242–glycine 290 form a DNA-binding region, fork-head.

The protein resides in the cytoplasm. It is found in the cytosol. In terms of biological role, transcription factor. The chain is Forkhead box protein O3B from Homo sapiens (Human).